The following is a 145-amino-acid chain: uncharacterized protein (145 aa).

Residues 63–83 (FLCLPLFLSFLVANLILWLSF) form a helical membrane-spanning segment.

The protein localises to the mitochondrion membrane. This is an uncharacterized protein from Arabidopsis thaliana (Mouse-ear cress).